The primary structure comprises 748 residues: Phosphoenolpyruvate-dependent phosphotransferase system (748 aa).

The GAF domain occupies 1-127 (MLTRLREIVE…RRQLLGVLVV (127 aa)). A linker region spans residues 128–170 (QQRELRQYDESEESFLVTLATQMAAILSQSQVTALFGQYRQTR). Residues 171 to 748 (IRALPAAPGV…GMGGLIRGGL (578 aa)) form a PTS EI region. The Tele-phosphohistidine intermediate role is filled by His-356. Phosphoenolpyruvate contacts are provided by Arg-462 and Arg-498. Mg(2+) is bound by residues Glu-597 and Asp-621. Phosphoenolpyruvate is bound by residues 620-621 (ND) and Arg-631. The Proton donor role is filled by Cys-668.

It belongs to the PEP-utilizing enzyme family. Mg(2+) is required as a cofactor.

The protein resides in the cytoplasm. The enzyme catalyses L-histidyl-[protein] + phosphoenolpyruvate = N(pros)-phospho-L-histidyl-[protein] + pyruvate. Its function is as follows. Component of the phosphoenolpyruvate-dependent nitrogen-metabolic phosphotransferase system (nitrogen-metabolic PTS), that seems to be involved in regulating nitrogen metabolism. Enzyme I-Ntr transfers the phosphoryl group from phosphoenolpyruvate (PEP) to the phosphoryl carrier protein (NPr). Could function in the transcriptional regulation of sigma-54 dependent operons in conjunction with the NPr (PtsO) and EIIA-Ntr (PtsN) proteins. Enzyme I-Ntr is specific for NPr. The protein is Phosphoenolpyruvate-dependent phosphotransferase system (ptsP) of Salmonella typhimurium (strain LT2 / SGSC1412 / ATCC 700720).